A 135-amino-acid polypeptide reads, in one-letter code: ATP synthase epsilon chain (135 aa).

It belongs to the ATPase epsilon chain family. In terms of assembly, F-type ATPases have 2 components, CF(1) - the catalytic core - and CF(0) - the membrane proton channel. CF(1) has five subunits: alpha(3), beta(3), gamma(1), delta(1), epsilon(1). CF(0) has three main subunits: a, b and c.

The protein resides in the cell inner membrane. Produces ATP from ADP in the presence of a proton gradient across the membrane. The protein is ATP synthase epsilon chain of Rhodopseudomonas palustris (strain ATCC BAA-98 / CGA009).